The primary structure comprises 151 residues: UPF0756 membrane protein GK2737 (151 aa).

4 helical membrane passes run V5 to V25, W53 to F73, S79 to A99, and I121 to A141.

This sequence belongs to the UPF0756 family.

The protein localises to the cell membrane. The chain is UPF0756 membrane protein GK2737 from Geobacillus kaustophilus (strain HTA426).